The sequence spans 553 residues: MPAFSQATDLSAWKELQEHHTAVGRNIVLKEAFEKDPQRFEKFSRTFKNTVDNSDILFDFSKNFLTEETLSLLVKLAKEANVEELRDAMFKGEHINFTEDRAVYHAALRNVSNEPMQVDGKSVVEDVNSVLEHMKEFSEQVRSGEWKGYTDKKIDTIINIGIGGSDLGPVMVTEALKPYGAPGMKLHFVSNIDGTHIAEALKDSNPETTLFLIASKTFTTAETTTNANSAKKWFLETAKDESHIAKHFVALSTNEAEVTKFGIDKKNMFGFESWVGGRYSVWSAIGLSVALYIGYDNFHQFLAGAQAMDKHFREAPLEQNIPAIGGLLSVWYSDFFGAQTHLVAPFDQYLHRFPAYLQQLSMESNGKAITRSGEYVKYTTGPILFGEPATNAQHSFFQLLHQGTKLIPSDFIMAAESHNPVEGGKHQRMLASNFLAQSEALMVGKTPEQVKTEGAPDNLVPHKTFLGNRPTTSILAQKITPSTLGALIAYYEHLTFTEGAVWNINSFDQWGVELGKVLAKKIQQELETSGAGAGHDASTSGLLAAFKQKANLA.

D-glucose 6-phosphate-binding positions include 164 to 165 (GS), 215 to 220 (SKTFTT), Gln-359, Glu-363, His-394, and Lys-516. Glu-363 (proton donor) is an active-site residue. Residues His-394 and Lys-516 contribute to the active site.

The protein belongs to the GPI family. In terms of assembly, homodimer.

It localises to the cytoplasm. The protein localises to the cytosol. The enzyme catalyses alpha-D-glucose 6-phosphate = beta-D-fructose 6-phosphate. It functions in the pathway carbohydrate degradation; glycolysis; D-glyceraldehyde 3-phosphate and glycerone phosphate from D-glucose: step 2/4. Its function is as follows. In the cytoplasm, catalyzes the conversion of glucose-6-phosphate to fructose-6-phosphate, the second step in glycolysis, and the reverse reaction during gluconeogenesis. This is Glucose-6-phosphate isomerase (pgiA) from Aspergillus oryzae (strain ATCC 42149 / RIB 40) (Yellow koji mold).